Consider the following 267-residue polypeptide: Urease accessory protein UreD 2 (267 aa).

This sequence belongs to the UreD family. As to quaternary structure, ureD, UreF and UreG form a complex that acts as a GTP-hydrolysis-dependent molecular chaperone, activating the urease apoprotein by helping to assemble the nickel containing metallocenter of UreC. The UreE protein probably delivers the nickel.

The protein resides in the cytoplasm. Its function is as follows. Required for maturation of urease via the functional incorporation of the urease nickel metallocenter. The polypeptide is Urease accessory protein UreD 2 (Synechococcus sp. (strain JA-3-3Ab) (Cyanobacteria bacterium Yellowstone A-Prime)).